The chain runs to 607 residues: ATP-dependent DNA helicase II subunit 1 (607 aa).

A Ku domain is found at 241–452 (MDLGNDVRIG…IETMQRILRG (212 aa)). Positions 570–604 (IKALKVSQLKDILRDRGLRVSGKKADLLDNLTNYV) constitute an SAP domain.

Belongs to the ku70 family. Heterodimer of pku70 and pku80.

The protein localises to the nucleus. The protein resides in the chromosome. It is found in the telomere. The catalysed reaction is ATP + H2O = ADP + phosphate + H(+). Its function is as follows. Single-stranded DNA-dependent ATP-dependent helicase. Involved in non-homologous end joining (NHEJ) DNA double strand break repair. DNA-binding is sequence-independent but has a high affinity to nicks in double-stranded DNA and to the ends of duplex DNA. Binds to naturally occurring chromosomal ends, and therefore provides chromosomal end protection. Required also for telomere recombination to repair telomeric ends in the absence of telomerase. ku70, of the ku70/ku80 heterodimer, binds to the stem loop of tlc1, the RNA component of telomerase. Required for mating-type switching. Involved in telomere maintenance. Interacts with telomeric repeats and subtelomeric sequences thereby controlling telomere length and protecting against subtelomeric rearrangement. Maintains telomeric chromatin, which is involved in silencing the expression of genes located at the telomere. This Schizosaccharomyces pombe (strain 972 / ATCC 24843) (Fission yeast) protein is ATP-dependent DNA helicase II subunit 1 (pku70).